We begin with the raw amino-acid sequence, 1131 residues long: DNA polymerase II large subunit (1131 aa).

This sequence belongs to the archaeal DNA polymerase II family. Heterodimer of a large subunit and a small subunit.

It catalyses the reaction DNA(n) + a 2'-deoxyribonucleoside 5'-triphosphate = DNA(n+1) + diphosphate. The enzyme catalyses Exonucleolytic cleavage in the 3'- to 5'-direction to yield nucleoside 5'-phosphates.. In terms of biological role, possesses two activities: a DNA synthesis (polymerase) and an exonucleolytic activity that degrades single-stranded DNA in the 3'- to 5'-direction. Has a template-primer preference which is characteristic of a replicative DNA polymerase. The protein is DNA polymerase II large subunit of Methanococcus maripaludis (strain C7 / ATCC BAA-1331).